The following is a 179-amino-acid chain: Transcription factor BOA15 (179 aa).

It is found in the nucleus. In terms of biological role, transcription factor that probably coregulates the gene clusters that mediates the biosynthesis of botcinin acid and its botcinin derivatives, acetate-derived polyketides that contribute to virulence when combined with the sesquiterpene botrydial. Botcinin acid and its derivatives have been shown to induce chlorosis and necrosis during host plant infection, but also have antifungal activities. The chain is Transcription factor BOA15 from Botryotinia fuckeliana (strain B05.10) (Noble rot fungus).